The following is a 1316-amino-acid chain: Serine/threonine-protein kinase 36 (1316 aa).

A Protein kinase domain is found at 4 to 254 (YHVLEMIGEG…WPDLLHHPFI (251 aa)). Residues 10 to 18 (IGEGSFGRV) and Lys-33 each bind ATP. Asp-125 functions as the Proton acceptor in the catalytic mechanism. The segment at 389–418 (QGFPEPRPEAMGRQSTDVVDPENEEPDSDD) is disordered. Acidic residues predominate over residues 407–418 (VDPENEEPDSDD).

The protein belongs to the protein kinase superfamily. Ser/Thr protein kinase family. As to quaternary structure, interacts with SPAG16 and KIF27. It depends on Mg(2+) as a cofactor. As to expression, weakly expressed in the heart and thymus, present at moderate to high levels in the lungs, pancreas, and kidneys and at higher levels in the brain and cerebellum. Very highly expressed in the testis.

It is found in the cytoplasm. The protein localises to the nucleus. It localises to the cytoskeleton. Its subcellular location is the cilium axoneme. The enzyme catalyses L-seryl-[protein] + ATP = O-phospho-L-seryl-[protein] + ADP + H(+). It carries out the reaction L-threonyl-[protein] + ATP = O-phospho-L-threonyl-[protein] + ADP + H(+). Serine/threonine protein kinase which plays an important role in the sonic hedgehog (Shh) pathway by regulating the activity of GLI transcription factors. Controls the activity of the transcriptional regulators GLI1, GLI2 and GLI3 by opposing the effect of SUFU and promoting their nuclear localization. GLI2 requires an additional function of STK36 to become transcriptionally active, but the enzyme does not need to possess an active kinase catalytic site for this to occur. Required for postnatal development, possibly by regulating the homeostasis of cerebral spinal fluid or ciliary function. Essential for construction of the central pair apparatus of motile cilia. In Mus musculus (Mouse), this protein is Serine/threonine-protein kinase 36.